Here is a 186-residue protein sequence, read N- to C-terminus: MISSNDFRTGTTIELDGQVWRVVEFLHVKPGKGSAFVRTKLKSAQSGNVVEKTFRAGEMVASALLEKSTLQHTYMEGEDFVFMDMASYEETRLTAKQIGEGRKYLKEGMEVNVVSWKDNPIEVELPNSVVLEVTETDPGVKGDTATGGTKPAIVETGAQVMVPLFISIGEKIKIDTRSDSYLGRES.

Belongs to the elongation factor P family.

The protein resides in the cytoplasm. It participates in protein biosynthesis; polypeptide chain elongation. Its function is as follows. Involved in peptide bond synthesis. Stimulates efficient translation and peptide-bond synthesis on native or reconstituted 70S ribosomes in vitro. Probably functions indirectly by altering the affinity of the ribosome for aminoacyl-tRNA, thus increasing their reactivity as acceptors for peptidyl transferase. In Synechococcus sp. (strain RCC307), this protein is Elongation factor P.